The primary structure comprises 254 residues: Leucyl/phenylalanyl-tRNA--protein transferase (254 aa).

This sequence belongs to the L/F-transferase family.

It localises to the cytoplasm. The enzyme catalyses N-terminal L-lysyl-[protein] + L-leucyl-tRNA(Leu) = N-terminal L-leucyl-L-lysyl-[protein] + tRNA(Leu) + H(+). The catalysed reaction is N-terminal L-arginyl-[protein] + L-leucyl-tRNA(Leu) = N-terminal L-leucyl-L-arginyl-[protein] + tRNA(Leu) + H(+). It catalyses the reaction L-phenylalanyl-tRNA(Phe) + an N-terminal L-alpha-aminoacyl-[protein] = an N-terminal L-phenylalanyl-L-alpha-aminoacyl-[protein] + tRNA(Phe). Functions in the N-end rule pathway of protein degradation where it conjugates Leu, Phe and, less efficiently, Met from aminoacyl-tRNAs to the N-termini of proteins containing an N-terminal arginine or lysine. The chain is Leucyl/phenylalanyl-tRNA--protein transferase from Bordetella bronchiseptica (strain ATCC BAA-588 / NCTC 13252 / RB50) (Alcaligenes bronchisepticus).